Reading from the N-terminus, the 187-residue chain is dTTP/UTP pyrophosphatase (187 aa).

Catalysis depends on aspartate 65, which acts as the Proton acceptor.

This sequence belongs to the Maf family. YhdE subfamily. The cofactor is a divalent metal cation.

The protein localises to the cytoplasm. It catalyses the reaction dTTP + H2O = dTMP + diphosphate + H(+). It carries out the reaction UTP + H2O = UMP + diphosphate + H(+). Nucleoside triphosphate pyrophosphatase that hydrolyzes dTTP and UTP. May have a dual role in cell division arrest and in preventing the incorporation of modified nucleotides into cellular nucleic acids. This is dTTP/UTP pyrophosphatase from Pyrococcus abyssi (strain GE5 / Orsay).